Consider the following 260-residue polypeptide: Indole-3-glycerol phosphate synthase (260 aa).

It belongs to the TrpC family.

It catalyses the reaction 1-(2-carboxyphenylamino)-1-deoxy-D-ribulose 5-phosphate + H(+) = (1S,2R)-1-C-(indol-3-yl)glycerol 3-phosphate + CO2 + H2O. It participates in amino-acid biosynthesis; L-tryptophan biosynthesis; L-tryptophan from chorismate: step 4/5. In Staphylococcus aureus (strain MSSA476), this protein is Indole-3-glycerol phosphate synthase.